The primary structure comprises 406 residues: Phosphopentomutase (406 aa).

Mn(2+) is bound by residues D10, D305, H310, D346, H347, and H358.

It belongs to the phosphopentomutase family. Mn(2+) is required as a cofactor.

It localises to the cytoplasm. The catalysed reaction is 2-deoxy-alpha-D-ribose 1-phosphate = 2-deoxy-D-ribose 5-phosphate. It carries out the reaction alpha-D-ribose 1-phosphate = D-ribose 5-phosphate. The protein operates within carbohydrate degradation; 2-deoxy-D-ribose 1-phosphate degradation; D-glyceraldehyde 3-phosphate and acetaldehyde from 2-deoxy-alpha-D-ribose 1-phosphate: step 1/2. Its function is as follows. Isomerase that catalyzes the conversion of deoxy-ribose 1-phosphate (dRib-1-P) and ribose 1-phosphate (Rib-1-P) to deoxy-ribose 5-phosphate (dRib-5-P) and ribose 5-phosphate (Rib-5-P), respectively. The polypeptide is Phosphopentomutase (Aliivibrio salmonicida (strain LFI1238) (Vibrio salmonicida (strain LFI1238))).